The following is a 216-amino-acid chain: 3-isopropylmalate dehydratase small subunit 2 (216 aa).

This sequence belongs to the LeuD family. LeuD type 1 subfamily. Heterodimer of LeuC and LeuD.

The catalysed reaction is (2R,3S)-3-isopropylmalate = (2S)-2-isopropylmalate. It functions in the pathway amino-acid biosynthesis; L-leucine biosynthesis; L-leucine from 3-methyl-2-oxobutanoate: step 2/4. Functionally, catalyzes the isomerization between 2-isopropylmalate and 3-isopropylmalate, via the formation of 2-isopropylmaleate. The polypeptide is 3-isopropylmalate dehydratase small subunit 2 (Bordetella pertussis (strain Tohama I / ATCC BAA-589 / NCTC 13251)).